The primary structure comprises 424 residues: Serine hydroxymethyltransferase (424 aa).

(6S)-5,6,7,8-tetrahydrofolate is bound by residues Leu-118 and 122–124; that span reads GHL. Lys-227 is modified (N6-(pyridoxal phosphate)lysine). 351-353 lines the (6S)-5,6,7,8-tetrahydrofolate pocket; it reads SPF.

Belongs to the SHMT family. Homodimer. It depends on pyridoxal 5'-phosphate as a cofactor.

It localises to the cytoplasm. It catalyses the reaction (6R)-5,10-methylene-5,6,7,8-tetrahydrofolate + glycine + H2O = (6S)-5,6,7,8-tetrahydrofolate + L-serine. Its pathway is one-carbon metabolism; tetrahydrofolate interconversion. The protein operates within amino-acid biosynthesis; glycine biosynthesis; glycine from L-serine: step 1/1. Its function is as follows. Catalyzes the reversible interconversion of serine and glycine with tetrahydrofolate (THF) serving as the one-carbon carrier. This reaction serves as the major source of one-carbon groups required for the biosynthesis of purines, thymidylate, methionine, and other important biomolecules. Also exhibits THF-independent aldolase activity toward beta-hydroxyamino acids, producing glycine and aldehydes, via a retro-aldol mechanism. The polypeptide is Serine hydroxymethyltransferase (Pseudothermotoga lettingae (strain ATCC BAA-301 / DSM 14385 / NBRC 107922 / TMO) (Thermotoga lettingae)).